Reading from the N-terminus, the 289-residue chain is MERPQLDSMSQDLSEALKEATKEVHIRAENSEFMRNFQKGQVSREGFKLVMASLYHIYTALEEEIERNKQNPVYAPLYFPEELHRRAALEQDMAFWYGPHWQEAIPYTPATQHYVKRLHEVGGTHPELLVAHAYTRYLGDLSGGQVLKKIAQKAMALPSSGEGLAFFTFPSIDNPTKFKQLYRARMNTLEMTPEVKHRVTEEAKTAFLLNIELFEELQALLTEEHKDQSPSQTEFLRQRPASLVQDTTSAETPRGKSQISTSSSQTPLLRWVLTLSFLLATVAVGIYAM.

Residues 1 to 266 (MERPQLDSMS…SQISTSSSQT (266 aa)) lie on the Cytoplasmic side of the membrane. Residues Lys-18, His-25, Tyr-134, and Arg-183 each coordinate heme b. The segment at 225 to 261 (HKDQSPSQTEFLRQRPASLVQDTTSAETPRGKSQIST) is disordered. A phosphoserine mark is found at Ser-229 and Ser-242. Polar residues predominate over residues 244-261 (VQDTTSAETPRGKSQIST). The helical; Anchor for type IV membrane protein transmembrane segment at 267 to 289 (PLLRWVLTLSFLLATVAVGIYAM) threads the bilayer.

It belongs to the heme oxygenase family. In terms of assembly, homodimer and higher order homooligomer. Oligomerization is crucial for its stability and function in the endoplasmic reticulum. Interacts with FLVCR2; this interaction is potentiated in the presence of heme. Post-translationally, a soluble form arises by proteolytic removal of the membrane anchor.

The protein resides in the endoplasmic reticulum membrane. The enzyme catalyses heme b + 3 reduced [NADPH--hemoprotein reductase] + 3 O2 = biliverdin IXalpha + CO + Fe(2+) + 3 oxidized [NADPH--hemoprotein reductase] + 3 H2O + H(+). Inhibited by metalloporphyrins such as Sn- and Zn-protoporphyrins. Its function is as follows. Catalyzes the oxidative cleavage of heme at the alpha-methene bridge carbon, released as carbon monoxide (CO), to generate biliverdin IXalpha, while releasing the central heme iron chelate as ferrous iron. Affords protection against programmed cell death and this cytoprotective effect relies on its ability to catabolize free heme and prevent it from sensitizing cells to undergo apoptosis. Functionally, catalyzes the oxidative cleavage of heme at the alpha-methene bridge carbon, released as carbon monoxide (CO), to generate biliverdin IXalpha, while releasing the central heme iron chelate as ferrous iron. The sequence is that of Heme oxygenase 1 (Hmox1) from Rattus norvegicus (Rat).